We begin with the raw amino-acid sequence, 354 residues long: uncharacterized protein (354 aa).

The protein belongs to the asfivirus B354L family.

This is an uncharacterized protein from Ornithodoros (relapsing fever ticks).